The following is a 356-amino-acid chain: Carminomycin 4-O-methyltransferase DauK (356 aa).

Arg153 contributes to the S-adenosyl-L-methionine binding site. Substrate is bound at residue Asp163. S-adenosyl-L-methionine-binding positions include Gly187, Glu210, 237 to 238, and Ser252; that span reads DF. Positions 257 and 303 each coordinate substrate.

This sequence belongs to the class I-like SAM-binding methyltransferase superfamily. Cation-independent O-methyltransferase family. As to quaternary structure, homodimer and homotetramer in equilibrium.

It carries out the reaction carminomycin + S-adenosyl-L-methionine = daunorubicin + S-adenosyl-L-homocysteine + H(+). It functions in the pathway antibiotic biosynthesis; daunorubicin biosynthesis. It participates in antibiotic biosynthesis; carminomycin biosynthesis. Strongly inhibited by S-adenosyl-L-homocysteine and weakly by adenine and methionine. Involved in the biosynthesis of the anthracyclines carminomycin and daunorubicin (daunomycin) which are aromatic polyketide antibiotics that exhibit high cytotoxicity and are widely applied in the chemotherapy of a variety of cancers. In vivo, catalyzes the transfer of a methyl group from S-adenosyl-L-methionine to the 4-O-position of carminomycin to form daunorubicin. In vitro, it also methylates the anthracyclines rhodomycin D (10-carbomethoxy-13-deoxycarminomycin), 10-carboxy-13-deoxycarminomycin, 13-deoxy-carminomycin and 13-dihydrocarminomycin at the 4-hydroxyl position. The sequence is that of Carminomycin 4-O-methyltransferase DauK (dauK) from Streptomyces sp. (strain C5).